Reading from the N-terminus, the 289-residue chain is MKAQKFSKASLLDDEDDYSTQLDRILARRKKSQKEDSGDLDTISFGSLSKAQARLQTEERESKKKVKKVKKPKVLKKQEEDFQPPSDISDDGEFFEEPSQDHQSRTSDRHSKEEPRSKSKHAPSESSAKKRVSKVREIPGLLNGSGSSSLYQDVRFDTAFGKADLQKARENYKFLDEYREKEITELNKILQDDMTEQLLSEREINTIKYKIQSLKSRVDTLKNRDLENEIVRDYKRNHKNFFLKNSDKRKLVQKAKFDSMKPSQREKVIERKRKRQLGREFKQLEFNQK.

A disordered region spans residues 27–149; that stretch reads ARRKKSQKED…GLLNGSGSSS (123 aa). Positions 63–75 are enriched in basic residues; the sequence is KKKVKKVKKPKVL. The span at 88 to 98 shows a compositional bias: acidic residues; sequence ISDDGEFFEEP. Basic and acidic residues predominate over residues 99 to 117; the sequence is SQDHQSRTSDRHSKEEPRS. The span at 140 to 149 shows a compositional bias: low complexity; sequence GLLNGSGSSS. Residues 162–224 adopt a coiled-coil conformation; the sequence is KADLQKAREN…KSRVDTLKNR (63 aa). Basic and acidic residues predominate over residues 253–269; it reads QKAKFDSMKPSQREKVI. Positions 253–272 are disordered; the sequence is QKAKFDSMKPSQREKVIERK.

It belongs to the RRP36 family. As to quaternary structure, associates with 90S and pre-40S pre-ribosomal particles.

It localises to the nucleus. The protein localises to the nucleolus. Its function is as follows. Component of the 90S pre-ribosome involved in the maturation of rRNAs. Required for early cleavages of the pre-RNAs in the 40S ribosomal subunit maturation pathway. This is rRNA biogenesis protein RRP36 (RRP36) from Komagataella phaffii (strain GS115 / ATCC 20864) (Yeast).